Consider the following 452-residue polypeptide: Exodeoxyribonuclease 7 large subunit (452 aa).

This sequence belongs to the XseA family. Heterooligomer composed of large and small subunits.

The protein localises to the cytoplasm. It carries out the reaction Exonucleolytic cleavage in either 5'- to 3'- or 3'- to 5'-direction to yield nucleoside 5'-phosphates.. Functionally, bidirectionally degrades single-stranded DNA into large acid-insoluble oligonucleotides, which are then degraded further into small acid-soluble oligonucleotides. The polypeptide is Exodeoxyribonuclease 7 large subunit (Bacillus mycoides (strain KBAB4) (Bacillus weihenstephanensis)).